Reading from the N-terminus, the 110-residue chain is uncharacterized protein (110 aa).

2 helical membrane-spanning segments follow: residues 21–41 (IQLA…PQIC) and 63–83 (PSMI…IIVV).

It localises to the membrane. This is an uncharacterized protein from Saccharomyces cerevisiae (strain ATCC 204508 / S288c) (Baker's yeast).